The primary structure comprises 1404 residues: DNA-directed RNA polymerase subunit beta' (1404 aa).

Residues cysteine 70, cysteine 72, cysteine 85, and cysteine 88 each coordinate Zn(2+). The Mg(2+) site is built by aspartate 460, aspartate 462, and aspartate 464. Cysteine 825, cysteine 899, cysteine 906, and cysteine 909 together coordinate Zn(2+).

The protein belongs to the RNA polymerase beta' chain family. As to quaternary structure, the RNAP catalytic core consists of 2 alpha, 1 beta, 1 beta' and 1 omega subunit. When a sigma factor is associated with the core the holoenzyme is formed, which can initiate transcription. Requires Mg(2+) as cofactor. The cofactor is Zn(2+).

It carries out the reaction RNA(n) + a ribonucleoside 5'-triphosphate = RNA(n+1) + diphosphate. DNA-dependent RNA polymerase catalyzes the transcription of DNA into RNA using the four ribonucleoside triphosphates as substrates. This chain is DNA-directed RNA polymerase subunit beta', found in Nitrosomonas eutropha (strain DSM 101675 / C91 / Nm57).